A 322-amino-acid polypeptide reads, in one-letter code: Lipoyl synthase (322 aa).

[4Fe-4S] cluster contacts are provided by cysteine 68, cysteine 73, cysteine 79, cysteine 94, cysteine 98, cysteine 101, and serine 309. In terms of domain architecture, Radical SAM core spans 80 to 298 (FNHGTASFMI…RVAGVEMGFS (219 aa)).

Belongs to the radical SAM superfamily. Lipoyl synthase family. It depends on [4Fe-4S] cluster as a cofactor.

The protein resides in the cytoplasm. It carries out the reaction [[Fe-S] cluster scaffold protein carrying a second [4Fe-4S](2+) cluster] + N(6)-octanoyl-L-lysyl-[protein] + 2 oxidized [2Fe-2S]-[ferredoxin] + 2 S-adenosyl-L-methionine + 4 H(+) = [[Fe-S] cluster scaffold protein] + N(6)-[(R)-dihydrolipoyl]-L-lysyl-[protein] + 4 Fe(3+) + 2 hydrogen sulfide + 2 5'-deoxyadenosine + 2 L-methionine + 2 reduced [2Fe-2S]-[ferredoxin]. It functions in the pathway protein modification; protein lipoylation via endogenous pathway; protein N(6)-(lipoyl)lysine from octanoyl-[acyl-carrier-protein]: step 2/2. Its function is as follows. Catalyzes the radical-mediated insertion of two sulfur atoms into the C-6 and C-8 positions of the octanoyl moiety bound to the lipoyl domains of lipoate-dependent enzymes, thereby converting the octanoylated domains into lipoylated derivatives. The polypeptide is Lipoyl synthase (Idiomarina loihiensis (strain ATCC BAA-735 / DSM 15497 / L2-TR)).